A 120-amino-acid polypeptide reads, in one-letter code: Flagellar protein FliT (120 aa).

The segment at 1–50 (MENLSPLLIEYQGLLKLIRNIKAMALNGLWDDVVEQEIVYIQSIERISQI) is required for homodimerization. Residues 60–98 (VQLQFRQLLQDILDTESQVKELLQNRMQELAVLIQQSQN) form a fliD binding region.

Belongs to the FliT family. As to quaternary structure, homodimer. Interacts with FliD and FlhC.

It localises to the cytoplasm. The protein localises to the cytosol. In terms of biological role, dual-function protein that regulates the transcription of class 2 flagellar operons and that also acts as an export chaperone for the filament-capping protein FliD. As a transcriptional regulator, acts as an anti-FlhDC factor; it directly binds FlhC, thus inhibiting the binding of the FlhC/FlhD complex to class 2 promoters, resulting in decreased expression of class 2 flagellar operons. As a chaperone, effects FliD transition to the membrane by preventing its premature polymerization, and by directing it to the export apparatus. The chain is Flagellar protein FliT from Dickeya chrysanthemi (Pectobacterium chrysanthemi).